Consider the following 205-residue polypeptide: Cytochrome c biogenesis ATP-binding export protein CcmA 1 (205 aa).

In terms of domain architecture, ABC transporter spans 2–205 (LEARDLYCER…LALTGGGAGL (204 aa)). 34–41 (GGNGAGKT) contacts ATP.

Belongs to the ABC transporter superfamily. CcmA exporter (TC 3.A.1.107) family. As to quaternary structure, the complex is composed of two ATP-binding proteins (CcmA) and two transmembrane proteins (CcmB).

It localises to the cell inner membrane. It catalyses the reaction heme b(in) + ATP + H2O = heme b(out) + ADP + phosphate + H(+). Its function is as follows. Part of the ABC transporter complex CcmAB involved in the biogenesis of c-type cytochromes; once thought to export heme, this seems not to be the case, but its exact role is uncertain. Responsible for energy coupling to the transport system. This chain is Cytochrome c biogenesis ATP-binding export protein CcmA 1, found in Salmonella typhimurium (strain LT2 / SGSC1412 / ATCC 700720).